Reading from the N-terminus, the 284-residue chain is Esterase alnB (284 aa).

Active-site charge relay system residues include Ser-93, Asp-226, and His-255.

The protein belongs to the LovG family.

Its pathway is polyketide biosynthesis. Functionally, esterase; part of the gene cluster that mediates the biosynthesis of asperlin, a polyketide showing anti-inflammatory, antitumor and antibiotic activities. The first step of the asperlin biosynthesis is the production of the intermediate 2,4,6-octatrienoic acid by the highly redusing polyketide synthase alnA with cleavage of the PKS product by the esterase alnB. 2,4,6-octatrienoic acid is further converted to asperlin via several steps involving the remaining enzymes from the cluster. The protein is Esterase alnB of Emericella nidulans (strain FGSC A4 / ATCC 38163 / CBS 112.46 / NRRL 194 / M139) (Aspergillus nidulans).